A 435-amino-acid polypeptide reads, in one-letter code: Phospholipase A1 EG1, chloroplastic/mitochondrial (435 aa).

The transit peptide at 1–31 (MTLPRQCAAACRTGGGGGGVVRCRAVAAAGG) directs the protein to the chloroplast and mitochondrion. Positions 264 to 268 (GHSMG) match the GXSXG motif. The Acyl-ester intermediate role is filled by Ser266. Active-site charge relay system residues include Asp324 and His371.

The protein belongs to the AB hydrolase superfamily. Lipase family.

Its subcellular location is the mitochondrion. The protein localises to the plastid. It is found in the chloroplast. It catalyses the reaction a 1,2-diacyl-sn-glycero-3-phosphocholine + H2O = a 2-acyl-sn-glycero-3-phosphocholine + a fatty acid + H(+). Its function is as follows. Phospholipase that releases free fatty acids from phospholipids. Catalyzes the initial step of jasmonate (JA) biosynthesis. Required for the biosynthesis of endogenous JA in seedling, inflorescence and spikelets. Not essential for JA biosynthesis after wounding. Mediates spikelet development and specification of empty-glume identity. Functions in a high temperature-dependent manner to maintain floral developmental robustness under heat stress conditions. Functions by safeguarding the expression of several floral identity genes, such as MADS1, MADS6 and G1. This Oryza sativa subsp. indica (Rice) protein is Phospholipase A1 EG1, chloroplastic/mitochondrial.